Here is a 155-residue protein sequence, read N- to C-terminus: MRCPYCGHLEDRVVDSRETQDGQATRRRRACLSCERRFTTYERIEDVLPQVVKKDGRREAFDRAKIVEGVATACQKRPVSTEQVEALVSAVERQVQELGEREIRTAVIGEAVMQRLRTLDEVAYVRFASVYRAFRDVGEFMTELAGLARKDGEER.

A zinc finger lies at 3-34; the sequence is CPYCGHLEDRVVDSRETQDGQATRRRRACLSC. The 91-residue stretch at 49–139 folds into the ATP-cone domain; sequence PQVVKKDGRR…VYRAFRDVGE (91 aa).

The protein belongs to the NrdR family. Zn(2+) is required as a cofactor.

In terms of biological role, negatively regulates transcription of bacterial ribonucleotide reductase nrd genes and operons by binding to NrdR-boxes. The protein is Transcriptional repressor NrdR of Anaeromyxobacter dehalogenans (strain 2CP-1 / ATCC BAA-258).